The chain runs to 421 residues: UDP-N-acetylglucosamine 1-carboxyvinyltransferase (421 aa).

22–23 is a binding site for phosphoenolpyruvate; sequence KN. A UDP-N-acetyl-alpha-D-glucosamine-binding site is contributed by R94. The Proton donor role is filled by C118. The residue at position 118 (C118) is a 2-(S-cysteinyl)pyruvic acid O-phosphothioketal. Residues 163–166, D308, and I330 contribute to the UDP-N-acetyl-alpha-D-glucosamine site; that span reads KVSV.

Belongs to the EPSP synthase family. MurA subfamily.

Its subcellular location is the cytoplasm. The enzyme catalyses phosphoenolpyruvate + UDP-N-acetyl-alpha-D-glucosamine = UDP-N-acetyl-3-O-(1-carboxyvinyl)-alpha-D-glucosamine + phosphate. It participates in cell wall biogenesis; peptidoglycan biosynthesis. Its function is as follows. Cell wall formation. Adds enolpyruvyl to UDP-N-acetylglucosamine. This Orientia tsutsugamushi (strain Boryong) (Rickettsia tsutsugamushi) protein is UDP-N-acetylglucosamine 1-carboxyvinyltransferase.